A 313-amino-acid polypeptide reads, in one-letter code: Ribosomal RNA small subunit methyltransferase H (313 aa).

S-adenosyl-L-methionine-binding positions include 35–37, Asp55, Phe79, Asp101, and Gln108; that span reads GGH.

It belongs to the methyltransferase superfamily. RsmH family.

It is found in the cytoplasm. The catalysed reaction is cytidine(1402) in 16S rRNA + S-adenosyl-L-methionine = N(4)-methylcytidine(1402) in 16S rRNA + S-adenosyl-L-homocysteine + H(+). Specifically methylates the N4 position of cytidine in position 1402 (C1402) of 16S rRNA. This is Ribosomal RNA small subunit methyltransferase H from Edwardsiella ictaluri (strain 93-146).